A 114-amino-acid chain; its full sequence is Histone H3-7 (114 aa).

Over residues 1–17 (NTGGKAPRKHIAHKQAK) the composition is skewed to basic residues. A disordered region spans residues 1–32 (NTGGKAPRKHIAHKQAKKSSAAAATGGVKKPH). The span at 18 to 28 (KSSAAAATGGV) shows a compositional bias: low complexity.

It belongs to the histone H3 family. In terms of assembly, the nucleosome is a histone octamer containing two molecules each of H2A, H2B, H3 and H4 assembled in one H3-H4 heterotetramer and two H2A-H2B heterodimers. The octamer wraps approximately 147 bp of DNA.

It localises to the nucleus. It is found in the chromosome. Its function is as follows. Core component of nucleosome. Nucleosomes wrap and compact DNA into chromatin, limiting DNA accessibility to the cellular machineries which require DNA as a template. Histones thereby play a central role in transcription regulation, DNA repair, DNA replication and chromosomal stability. DNA accessibility is regulated via a complex set of post-translational modifications of histones, also called histone code, and nucleosome remodeling. This chain is Histone H3-7 (H3-7), found in Stylonychia lemnae (Ciliate).